We begin with the raw amino-acid sequence, 247 residues long: MNVLPCSVNTLKGLYDISGVEVGQHFYWQIGGFQVHAQVLITSWFVIAILLGSAIIAVRNPQTIPTDGQNFFEYVLEFIRDLSKTQIGEEYGPWVPFIGTMFLFIFVSNWSGALLPWKIIQLPHGELAAPTNDINTTVALALPTSVAYFYAGLTKKGLGYFGKYIQPTPILLPINILEDFTKPLSLSFRLFGNILADELVVVVLVSLVPSVVPIPVMFLGLFTSGIQALIFATLAAAYIGESMEGHH.

5 helical membrane passes run Q38 to V58, V95 to L115, I134 to T154, L199 to L219, and G220 to G240.

Belongs to the ATPase A chain family. As to quaternary structure, F-type ATPases have 2 components, CF(1) - the catalytic core - and CF(0) - the membrane proton channel. CF(1) has five subunits: alpha(3), beta(3), gamma(1), delta(1), epsilon(1). CF(0) has four main subunits: a, b, b' and c.

The protein resides in the plastid. It is found in the chloroplast thylakoid membrane. Its function is as follows. Key component of the proton channel; it plays a direct role in the translocation of protons across the membrane. This is ATP synthase subunit a, chloroplastic from Ranunculus macranthus (Large buttercup).